A 149-amino-acid polypeptide reads, in one-letter code: Nucleoside diphosphate kinase 1 (149 aa).

Position 1 is an N-acetylmethionine (methionine 1). The ATP site is built by lysine 9, phenylalanine 57, arginine 85, threonine 91, arginine 102, and asparagine 112. Histidine 115 (pros-phosphohistidine intermediate) is an active-site residue.

This sequence belongs to the NDK family. In terms of assembly, interacts with CAT1, CAT2 and CAT3. Mg(2+) serves as cofactor.

It is found in the peroxisome. The protein resides in the nucleus. It localises to the cytoplasm. It carries out the reaction a 2'-deoxyribonucleoside 5'-diphosphate + ATP = a 2'-deoxyribonucleoside 5'-triphosphate + ADP. The enzyme catalyses a ribonucleoside 5'-diphosphate + ATP = a ribonucleoside 5'-triphosphate + ADP. Its function is as follows. Major role in the synthesis of nucleoside triphosphates other than ATP. The ATP gamma phosphate is transferred to the NDP beta phosphate via a ping-pong mechanism, using a phosphorylated active-site intermediate. Plays a role in response to reactive oxygen species (ROS) stress. This chain is Nucleoside diphosphate kinase 1 (NDK1), found in Arabidopsis thaliana (Mouse-ear cress).